Consider the following 570-residue polypeptide: Putative pyruvate decarboxylase C3G9.11c (570 aa).

The pyruvate site is built by Asp-30 and His-119. Thiamine diphosphate contacts are provided by residues Thr-396 and 419 to 421 (GSI). Residue Asp-451 coordinates Mg(2+). Thiamine diphosphate contacts are provided by residues 452-453 (GS) and 478-483 (NKGYTI). 2 residues coordinate Mg(2+): Asn-478 and Gly-480. Glu-484 is a binding site for pyruvate.

This sequence belongs to the TPP enzyme family. Homotetramer. Requires Mg(2+) as cofactor. The cofactor is thiamine diphosphate.

The protein localises to the cytoplasm. It localises to the nucleus. The enzyme catalyses a 2-oxocarboxylate + H(+) = an aldehyde + CO2. The catalysed reaction is pyruvate + H(+) = acetaldehyde + CO2. The polypeptide is Putative pyruvate decarboxylase C3G9.11c (Schizosaccharomyces pombe (strain 972 / ATCC 24843) (Fission yeast)).